A 529-amino-acid polypeptide reads, in one-letter code: DNA polymerase lambda (529 aa).

Residues 14-109 enclose the BRCT domain; that stretch reads DPEGMFAGMV…EKANEDLYVL (96 aa). Residues 119–199 form a disordered region; sequence PKKSLPAISG…ESTSVYKPPD (81 aa). Residues 153-175 are compositionally biased toward polar residues; that stretch reads SHSNTQGSPDSPTSCSVPSTSAS. Positions 182-193 are enriched in low complexity; that stretch reads ETPTSPQSESTS. Residues 213-227 are DNA-binding; the sequence is NIYRALGEDRRSFSY. The active site involves His-260. The DNA-binding stretch occupies residues 295-298; it reads GPAT. Residues Arg-336, 367–370, and 376–379 each bind dCTP; these read SYRR and GDLD. Residues 370–379 are involved in primer binding; the sequence is RGKATCGDLD. Positions 377, 379, and 444 each coordinate Mn(2+). The segment at 418 to 459 is DNA-binding; that stretch reads EEGTDSGVDTYFGLCTYPGQELRRRIDFKVYPRDIYSFGLIA. Asn-467 is a binding site for dCTP.

This sequence belongs to the DNA polymerase type-X family. In terms of assembly, interacts with the DNA repair proteins XRCC4 and LIG4. Interacts with HSP90-1. Mn(2+) serves as cofactor.

It localises to the nucleus. The enzyme catalyses DNA(n) + a 2'-deoxyribonucleoside 5'-triphosphate = DNA(n+1) + diphosphate. Functionally, repair polymerase involved in base excision repair (BER) and responsible for repair of lesions that give rise to abasic (AP) sites in DNA. Has both DNA polymerase and terminal transferase activities. Has a 5'-deoxyribose-5-phosphate lyase (dRP lyase) activity. Involved in the repair of transposon-induced DNA double strand breaks (DSBs). Involved in repair of UV-B-mediated DNA damage during seedling development through an excision repair mechanism. Involved the repair of DSBs induced by high salinity and DNA cross-linking agent. Functions via the DNA non-homologous end joining (NHEJ) pathway. The polypeptide is DNA polymerase lambda (Arabidopsis thaliana (Mouse-ear cress)).